Consider the following 120-residue polypeptide: Small ribosomal subunit protein bS6 (120 aa).

Residues 97–112 (SNEPSPILKNQSTENT) show a composition bias toward polar residues. The interval 97-120 (SNEPSPILKNQSTENTPVIDVTAN) is disordered.

Belongs to the bacterial ribosomal protein bS6 family.

In terms of biological role, binds together with bS18 to 16S ribosomal RNA. The chain is Small ribosomal subunit protein bS6 from Rickettsia bellii (strain RML369-C).